Consider the following 283-residue polypeptide: Polyamine aminopropyltransferase (283 aa).

A PABS domain is found at 5-238 (PTWIDEYHKG…GIWSWTFASD (234 aa)). Q32 is an S-methyl-5'-thioadenosine binding site. Positions 63 and 87 each coordinate spermidine. Residues E107 and 139 to 140 (DG) contribute to the S-methyl-5'-thioadenosine site. The Proton acceptor role is filled by D158. A spermidine-binding site is contributed by 158–161 (DCSD).

The protein belongs to the spermidine/spermine synthase family. Homodimer or homotetramer.

The protein localises to the cytoplasm. The enzyme catalyses S-adenosyl 3-(methylsulfanyl)propylamine + putrescine = S-methyl-5'-thioadenosine + spermidine + H(+). Its pathway is amine and polyamine biosynthesis; spermidine biosynthesis; spermidine from putrescine: step 1/1. Functionally, catalyzes the irreversible transfer of a propylamine group from the amino donor S-adenosylmethioninamine (decarboxy-AdoMet) to putrescine (1,4-diaminobutane) to yield spermidine. This is Polyamine aminopropyltransferase from Prochlorococcus marinus subsp. pastoris (strain CCMP1986 / NIES-2087 / MED4).